The primary structure comprises 257 residues: Caspase-14 (257 aa).

Residues His93 and Cys136 contribute to the active site. The propeptide occupies 156–167 (DEELGGDEVAVL).

This sequence belongs to the peptidase C14A family. As to quaternary structure, heterodimer of a large and a small subunit, both processed from the precursor; the mature active form is a p17/p10 dimer and the intermediate form a p20/p8 dimer. Post-translationally, maturation by proteolytic processing appears to be a two-step process. The precursor is processed by KLK7 to yield the p20/p8 intermediate form which acts the precursor to yield the p17/p10 mature form. Initially it was reported that cleavage by granzyme B, caspase-8 and -10 generates the two active subunits, however the physiological relevance has not been established. In terms of tissue distribution, embryo, adult liver and less in adult brain and kidney. Expressed in differentiating keratinocytes of embryonic skin (at protein level). Expressed in keratinocytes of adult skin suprabasal layers (at protein level).

The protein localises to the cytoplasm. It is found in the nucleus. In terms of biological role, non-apoptotic caspase which is involved in epidermal differentiation. Seems to play a role in keratinocyte differentiation and is required for cornification. Regulates maturation of the epidermis by proteolytically processing filaggrin. In vitro is equally active on the synthetic caspase substrates WEHD-ACF and IETD-AFC. Involved in processing of prosaposin in the epidermis. May be involved in retinal pigment epithelium cell barrier function. This is Caspase-14 (Casp14) from Mus musculus (Mouse).